The following is a 419-amino-acid chain: Diaminopimelate decarboxylase (419 aa).

An N6-(pyridoxal phosphate)lysine modification is found at Lys-56. Residues Gly-234 and 274-277 contribute to the pyridoxal 5'-phosphate site; that span reads EPGR. Residues Arg-277, Arg-312, and Tyr-316 each coordinate substrate. The Proton donor role is filled by Cys-343. Glu-344 and Tyr-372 together coordinate substrate. Tyr-372 contributes to the pyridoxal 5'-phosphate binding site.

It belongs to the Orn/Lys/Arg decarboxylase class-II family. LysA subfamily. Homodimer. The cofactor is pyridoxal 5'-phosphate.

It catalyses the reaction meso-2,6-diaminopimelate + H(+) = L-lysine + CO2. The protein operates within amino-acid biosynthesis; L-lysine biosynthesis via DAP pathway; L-lysine from DL-2,6-diaminopimelate: step 1/1. Specifically catalyzes the decarboxylation of meso-diaminopimelate (meso-DAP) to L-lysine. This Archaeoglobus fulgidus (strain ATCC 49558 / DSM 4304 / JCM 9628 / NBRC 100126 / VC-16) protein is Diaminopimelate decarboxylase.